Here is a 398-residue protein sequence, read N- to C-terminus: MNEDITPKKPNAIIEWIDYRLPIFAFLKHFSHYQTPKNLNYLWNLGSIAGIALVIQIITGVILAMHYTPHVDHAFDSVERIMRNVNYGWLLRYTHAVGASMFFAAVYLHIARGLYYGSYKAPRELLWHIGIIIFLTMMATAFMGYVLPWGQMSYWGATVITNLFSAIPLIGEFIVTWLWGGFSVDNPTLNRFFSLHYLLPFIIVALVMLHLVALHQHGSNNPKGIDVKSPKDTIPFHPYYTVKDFVGFGVYFIIFAYFIFYEPNYLGHPDNYIPANPLVTPAHIVPEWYFLPFYAILRAMPSKLGGVLLMFGSIFVLFLLPWLDTSKVRSSNYRPIYRMAFWIFMADCLLLGYLGGQPAEEPYITISRFAACYYFFHVLVALPLIGKYEKPLPLPEEL.

Residues 45 to 65 (LGSIAGIALVIQIITGVILAM) form a helical membrane-spanning segment. Heme b-binding residues include His95 and His109. The next 9 helical transmembrane spans lie at 96-116 (AVGA…GLYY), 129-149 (IGII…VLPW), 164-184 (FSAI…GFSV), 192-212 (FFSL…LHLV), 245-265 (FVGF…EPNY), 277-297 (PLVT…YAIL), 304-324 (LGGV…PWLD), 339-359 (MAFW…GQPA), and 366-386 (ISRF…PLIG). Heme b-binding residues include His196 and His210.

The protein belongs to the cytochrome b family. The main subunits of complex b-c1 are: cytochrome b, cytochrome c1 and the Rieske protein. The cofactor is heme b.

Its subcellular location is the cell membrane. Component of the ubiquinol-cytochrome c reductase complex (complex III or cytochrome b-c1 complex), which is a respiratory chain that generates an electrochemical potential coupled to ATP synthesis. The chain is Cytochrome b (petB) from Rickettsia conorii (strain ATCC VR-613 / Malish 7).